A 958-amino-acid polypeptide reads, in one-letter code: Collagen alpha-1(I) chain (958 aa).

The disordered stretch occupies residues 1–958 (GPMGPSGPRG…PGPPGPPGPP (958 aa)). The segment covering 50 to 64 (NGDDGEAGKPGRPGE) has biased composition (basic and acidic residues). Phosphoserine is present on S92. Low complexity-rich tracts occupy residues 100–116 (DAGP…PGEN) and 139–152 (PAGA…TGAA). Residues 154–166 (PPGPTGPAGPPGF) show a composition bias toward pro residues. The span at 216–232 (APGIAGAPGFPGARGPS) shows a compositional bias: low complexity. Residues 294 to 303 (GERGGPGSRG) show a composition bias toward gly residues. 8 stretches are compositionally biased toward low complexity: residues 304 to 335 (FPGS…PGEA), 347 to 373 (KGIT…QDGR), 382 to 401 (ARGQ…AGEP), 557 to 571 (SGPS…ARGA), 584 to 614 (AGFA…AGPA), 640 to 656 (SAGP…AGRV), 685 to 694 (ETGPAGRPGE), and 704 to 728 (AGEK…QGIA). A Phosphoserine modification is found at S560. Pro residues-rich tracts occupy residues 769–779 (PPGPVGPPGIA) and 808–823 (AGPP…PGPV). Residues 859–873 (RGDKGETGEQGDRGI) show a composition bias toward basic and acidic residues. Over residues 892-925 (PGEQGPSGASGPAGPRGPPGSAGAPGKDGINGIP) the composition is skewed to low complexity. Over residues 943 to 958 (VGPPGPPGPPGPPGPP) the composition is skewed to pro residues.

The protein belongs to the fibrillar collagen family. Trimers of one alpha 2(I) and two alpha 1(I) chains. Post-translationally, prolines at the third position of the tripeptide repeating unit (G-X-Y) are hydroxylated in some or all of the chains. In terms of tissue distribution, forms the fibrils of tendon, ligaments and bones. In bones, the fibrils are mineralized with calcium hydroxyapatite.

It is found in the secreted. The protein localises to the extracellular space. It localises to the extracellular matrix. Type I collagen is a member of group I collagen (fibrillar forming collagen). The protein is Collagen alpha-1(I) chain of Macrauchenia sp.